A 418-amino-acid polypeptide reads, in one-letter code: Gamma-glutamyl phosphate reductase (418 aa).

This sequence belongs to the gamma-glutamyl phosphate reductase family.

It localises to the cytoplasm. The catalysed reaction is L-glutamate 5-semialdehyde + phosphate + NADP(+) = L-glutamyl 5-phosphate + NADPH + H(+). Its pathway is amino-acid biosynthesis; L-proline biosynthesis; L-glutamate 5-semialdehyde from L-glutamate: step 2/2. Its function is as follows. Catalyzes the NADPH-dependent reduction of L-glutamate 5-phosphate into L-glutamate 5-semialdehyde and phosphate. The product spontaneously undergoes cyclization to form 1-pyrroline-5-carboxylate. This Marinobacter nauticus (strain ATCC 700491 / DSM 11845 / VT8) (Marinobacter aquaeolei) protein is Gamma-glutamyl phosphate reductase.